Reading from the N-terminus, the 2517-residue chain is MAPAPSALVFGSQTTLPSVEAASRLRAALLLDPRLYRMRTSIESLPEIWPALAISDPALERVAGPAEKSLRQLCRWLSHSEFPDATEISELPATFVTPFTVILHTVLYMHYTDENGSRGHADVLRAVRNNGGVQGFCTGFLTAVSVATSPDLEALSRQASVALRLAVAIGAYIDLDLLDSDVSSVAVRSRAGKKGLEETLAQFPGAYISVITDELNATVTAPRASLDALSQSLASNGLSAKRFDLRGRFHHPAHQKALEGLYNLVASNPVFQFSHSELLAPVYSNIDGQLLSSDSIIDTLLQSILVQRCDWYASISTALHKRSNGEKTSVVQFSLVECIPPSVLRQARLSVQRITDVPVQNSPATVPAPLNAVRARIQTSEPIAIIGMGCKFPGADTLDEYWQLLAQGTSMCRTMPEERFKTSSLRRSPGEKLKFWGNFVNDVDAFDHRFFKKSSREAASMDPQQRLVLQVAYQTLESAEYSGLSGIKASRDVGCYLGLCASDYTDNVASHPPNAFSSLGTLRAFLSGKISHFFGWTGPSITYDTACSSSAVAIQAACRALQTGECSMALAGGVSLYTSPNFYQNLSAASFLSPTGPTKPFDAKGDGYCRGEGVGLVFLKPLSSALADHDNIMGVIAAAAVNQNQNSTAITVPHSESQIELYRKVVSEAGLHPHDVSFVEAHGTGTPVGDPIEFTSIRTVFGGSNRANPLAIASVKGNIGHTEGAAACINNYGAAGSNAAMIVTEAPTGARSEKQGTLPKCPIYVSANTVSSLKEYCKELLRSLRGRSPDCLASLAFQLANSQNRGFPHALITSVTSKAELEDQLSAVVENRNNSLHTVAPTERPVVLAFGGQVARSVGLSRQVYDSSAVLRTHLSNCDDILTSAGLNSIFPAIFRKEPIADVVLLHSALFSAQYACAMTWIEAGVIPAALIGHSFGQLTALSVGRVLSLKDGLGLITERAKLMRDAWGPEHGSMVSVQADVQTVARLMKAAETKDPKDALEIACFNGPTSHVVVGSADAADRLEAALTQESIRYKRLAVSHGFHSKFTEPLLLGLEQCAERLTFRTPKYAIETCSSGSSWSEFNASMIVQHTRTPVYYTEALARIEAKLGACTWLEVGTGGSVAGMIRGALNVPSDHLIQAVNLAGETGTAALADATVNLWKSSHKLQFWAFHRSERECYQPLELPPYQFEKTRHWLDWKDTMTEQATVTQSTREETSVEEFLTFVKYKDSTKQQAEFRISTEHEKYSFFVKGHAVLAEPLCPAPLYIDLACKAGQMVYSDTSETLIIPSVEDLEIQAPLGVGDRVIILRLQQSPFLKTAWTFCFCSRPVMGNSAEEQLHASGTVVLRENDTKTAAEFSRFGRLVSSKRVQEMKSDPDCHILQGPVVYQLFSRVVSYADYYKGVQSVYASGAEVTGRIRLPPTVKDADTRRPLLVDNFIQTAGIHVNCLTDVGAKEVYVCTKVDRVQSAAAFTEDLANVDASWIVHSSYHPTSEKEVVNDIFVFNAATGELAMFILGAHFTRVQISSLGRVLSRANTADAAPIKVAVPVQSPALRAQPKRVLLPPLTKRSITRPTLEISEKLKKTLSRVVEVPVADIHDGGILADLGVDSLLGTEVLTEINQVFNVSIPADEFALLTDVASISKCLASYLGVHDSGSQPEDLADADSVESDSDMPTGAVTSGITTPDDAVSRLADLLAENLEYDGTIEASNNLADLGLDSILSIELANDIKKIFNCDVDMSQLNMESTFADLIALVPALNIEQSLSSVPASLTTQGSDFEMAQHAFEQIRFDYDIYTKETGFYDFWKRVYPAQSRLVLAYTVEAFAQLGCDLALMHPGDRLPKIGYLPAHEKLVQQLYNILRDGMLVATSDSGFVRSDKPVDPTSSTRLLEEINTIAPQHASEHSLLHITGSKLADCLTGTADPLNLLFRSKANRDLLAEVYLNGPMYAAISRLLCSFLGNAFSDRQSSGTFQILELGGGTGGTTGHVLDYLVRSGIPFTYTFSDVSGSFVAAARKKFAGRPYMEYQVIDIEKEPADSLTGKFHAVISTNCIHATTNLEISTGNIHRMLRPDGFVALVEFTRNMYWFDLVFGLLEGWWLFEDGRQHVIASESFWNTSMRKAGFQHVSWTDGDSFEARTLRIIAGFRAPAVNEIYTPRLDSRDTETAVESVMYKQADGIPLFADIYYPPSVSNEPRPIALMIHGGGHIMLSRKDIRPKQTAHLHTLGFLPVSIDYRLCPETTLTEGPMRDVSDAMAWARSTLCSLPLLCPGLTLDPSRVVVVGWSTGGHLAMTTAFTSIERGLSPPDAILAFYCPTDYEDRVWTQPNYPENTDVDGLSLMKYNLLEGVQDRPITAYNIPLTSRSNSKAGGTPAGGWMAPDDPRSRIVLHMNWKGQCLPVLLRGLPPSNSLSPGDAEKLISQPQPEIEEIQRVSPYAQIRRGVYRTPTFVIHGTDDDLIPYEQSVRTVQALKDMGVRAEVSVPQGKAHLFDMFKDADGSSWEVVKRGYDFLKEEVSGK.

The tract at residues 59-250 is N-terminal acylcarrier protein transacylase domain (SAT); the sequence is LERVAGPAEK…KRFDLRGRFH (192 aa). A Ketosynthase family 3 (KS3) domain is found at 380 to 775; that stretch reads SEPIAIIGMG…SANTVSSLKE (396 aa). Residues Cys-547, His-682, and His-721 each act as for beta-ketoacyl synthase activity in the active site. Positions 849–1158 are malonyl-CoA:ACP transacylase (MAT) domain; the sequence is AFGGQVARSV…TGTAALADAT (310 aa). Ser-935 serves as the catalytic For acyl/malonyl transferase activity. Residues 1221-1353 form an N-terminal hotdog fold region; that stretch reads EEFLTFVKYK…GTVVLRENDT (133 aa). The PKS/mFAS DH domain maps to 1221-1530; that stretch reads EEFLTFVKYK…FTRVQISSLG (310 aa). The interval 1251–1525 is product template (PT) domain; that stretch reads FVKGHAVLAE…ILGAHFTRVQ (275 aa). His-1255 functions as the Proton acceptor; for dehydratase activity in the catalytic mechanism. Positions 1379–1530 are C-terminal hotdog fold; it reads DCHILQGPVV…FTRVQISSLG (152 aa). Asp-1437 functions as the Proton donor; for dehydratase activity in the catalytic mechanism. A Carrier 1 domain is found at 1574–1651; it reads RPTLEISEKL…SISKCLASYL (78 aa). Ser-1611 carries the O-(pantetheine 4'-phosphoryl)serine modification. Residues 1659–1684 form a disordered region; the sequence is QPEDLADADSVESDSDMPTGAVTSGI. Positions 1662–1673 are enriched in acidic residues; the sequence is DLADADSVESDS. A Carrier 2 domain is found at 1685–1761; the sequence is TTPDDAVSRL…DLIALVPALN (77 aa). Ser-1721 carries the O-(pantetheine 4'-phosphoryl)serine modification. Positions 1976-2075 are methyltransferase (CMeT) domain; sequence LELGGGTGGT…IHRMLRPDGF (100 aa). The tract at residues 2200–2514 is thioesterase (TE) domain; the sequence is LMIHGGGHIM…RGYDFLKEEV (315 aa).

Requires pantetheine 4'-phosphate as cofactor.

The enzyme catalyses 3 malonyl-CoA + acetyl-CoA + S-adenosyl-L-methionine + H(+) = 3-methylorsellinate + S-adenosyl-L-homocysteine + 3 CO2 + 4 CoA. The protein operates within phytotoxin biosynthesis. In terms of biological role, non-reducing polyketide synthase; part of the gene cluster that mediates the biosynthesis of cichorine, a phytotoxin active against knapweed, corn, and soybeans. The first step in the pathway is performed by the non-reducing polyketide synthase pkbA that condenses one acetyl-CoA starter unit with 3 malonyl-CoA units. PkbA also catalyzes one methylation step to produce 3-methylorsellinate. The nonribosomal peptide synthase-like protein cicB, the cytochrome P450 monooxygenase cicH and the O-methyltransferase cicE are involved in the conversion of 3-methylorsellinate into nidulol. CicB converts 3-methylorsellinate to a yet unidentified intermediate, cicH may play a ring-closing role for cichorine and cicE is plausibly responsible for the methylation of one of the phenol groups. The oxidoreductase cicC acts downstream with still unidentified enzymes to further convert nidulol into cichorin. In Emericella nidulans (strain FGSC A4 / ATCC 38163 / CBS 112.46 / NRRL 194 / M139) (Aspergillus nidulans), this protein is Non-reducing polyketide synthase pkbA.